The following is a 227-amino-acid chain: Cytochrome c oxidase subunit 2 (227 aa).

The Mitochondrial intermembrane segment spans residues 1–14 (MAYPFQLGLQDATS). The chain crosses the membrane as a helical span at residues 15–45 (PIMEELMNFHDHTLMIVFLISTLVLYIISLM). The Mitochondrial matrix portion of the chain corresponds to 46–59 (LTTKLTHTSTMDAQ). A helical transmembrane segment spans residues 60–87 (EVETVWTILPAVILIMIALPSLRILYMM). Residues 88–227 (DEINNPVLTV…HFENWSTSMI (140 aa)) are Mitochondrial intermembrane-facing. Residues histidine 161, cysteine 196, glutamate 198, cysteine 200, histidine 204, and methionine 207 each contribute to the Cu cation site. Glutamate 198 is a Mg(2+) binding site.

This sequence belongs to the cytochrome c oxidase subunit 2 family. Component of the cytochrome c oxidase (complex IV, CIV), a multisubunit enzyme composed of 14 subunits. The complex is composed of a catalytic core of 3 subunits MT-CO1, MT-CO2 and MT-CO3, encoded in the mitochondrial DNA, and 11 supernumerary subunits COX4I, COX5A, COX5B, COX6A, COX6B, COX6C, COX7A, COX7B, COX7C, COX8 and NDUFA4, which are encoded in the nuclear genome. The complex exists as a monomer or a dimer and forms supercomplexes (SCs) in the inner mitochondrial membrane with NADH-ubiquinone oxidoreductase (complex I, CI) and ubiquinol-cytochrome c oxidoreductase (cytochrome b-c1 complex, complex III, CIII), resulting in different assemblies (supercomplex SCI(1)III(2)IV(1) and megacomplex MCI(2)III(2)IV(2)). Found in a complex with TMEM177, COA6, COX18, COX20, SCO1 and SCO2. Interacts with TMEM177 in a COX20-dependent manner. Interacts with COX20. Interacts with COX16. The cofactor is Cu cation.

The protein localises to the mitochondrion inner membrane. It carries out the reaction 4 Fe(II)-[cytochrome c] + O2 + 8 H(+)(in) = 4 Fe(III)-[cytochrome c] + 2 H2O + 4 H(+)(out). Functionally, component of the cytochrome c oxidase, the last enzyme in the mitochondrial electron transport chain which drives oxidative phosphorylation. The respiratory chain contains 3 multisubunit complexes succinate dehydrogenase (complex II, CII), ubiquinol-cytochrome c oxidoreductase (cytochrome b-c1 complex, complex III, CIII) and cytochrome c oxidase (complex IV, CIV), that cooperate to transfer electrons derived from NADH and succinate to molecular oxygen, creating an electrochemical gradient over the inner membrane that drives transmembrane transport and the ATP synthase. Cytochrome c oxidase is the component of the respiratory chain that catalyzes the reduction of oxygen to water. Electrons originating from reduced cytochrome c in the intermembrane space (IMS) are transferred via the dinuclear copper A center (CU(A)) of subunit 2 and heme A of subunit 1 to the active site in subunit 1, a binuclear center (BNC) formed by heme A3 and copper B (CU(B)). The BNC reduces molecular oxygen to 2 water molecules using 4 electrons from cytochrome c in the IMS and 4 protons from the mitochondrial matrix. In Apodemus semotus (Taiwan field mouse), this protein is Cytochrome c oxidase subunit 2 (MT-CO2).